A 485-amino-acid polypeptide reads, in one-letter code: Protein nucleotidyltransferase YdiU (485 aa).

ATP is bound by residues glycine 85, glycine 87, arginine 88, lysine 108, aspartate 120, glycine 121, arginine 171, and arginine 178. Aspartate 249 serves as the catalytic Proton acceptor. Asparagine 250 and aspartate 259 together coordinate Mg(2+). Residue aspartate 259 participates in ATP binding. The segment at 462 to 485 is disordered; it reads LPTTPNYQDPPADGDRSYQTFCGT.

Belongs to the SELO family. The cofactor is Mg(2+). Requires Mn(2+) as cofactor.

The catalysed reaction is L-seryl-[protein] + ATP = 3-O-(5'-adenylyl)-L-seryl-[protein] + diphosphate. It catalyses the reaction L-threonyl-[protein] + ATP = 3-O-(5'-adenylyl)-L-threonyl-[protein] + diphosphate. The enzyme catalyses L-tyrosyl-[protein] + ATP = O-(5'-adenylyl)-L-tyrosyl-[protein] + diphosphate. It carries out the reaction L-histidyl-[protein] + UTP = N(tele)-(5'-uridylyl)-L-histidyl-[protein] + diphosphate. The catalysed reaction is L-seryl-[protein] + UTP = O-(5'-uridylyl)-L-seryl-[protein] + diphosphate. It catalyses the reaction L-tyrosyl-[protein] + UTP = O-(5'-uridylyl)-L-tyrosyl-[protein] + diphosphate. Its function is as follows. Nucleotidyltransferase involved in the post-translational modification of proteins. It can catalyze the addition of adenosine monophosphate (AMP) or uridine monophosphate (UMP) to a protein, resulting in modifications known as AMPylation and UMPylation. This is Protein nucleotidyltransferase YdiU from Teredinibacter turnerae (strain ATCC 39867 / T7901).